A 308-amino-acid polypeptide reads, in one-letter code: General transcription factor IIH subunit 3 (308 aa).

A C4-type zinc finger spans residues 268-285 (CSVCLSIFCNFSPICTTC).

Belongs to the TFB4 family. Part of a TFIID-containing RNA polymerase II pre-initiation complex that is composed of TBP and at least GTF2A1, GTF2A2, GTF2E1, GTF2E2, GTF2F1, GTF2H2, GTF2H3, GTF2H4, GTF2H5, GTF2B, TCEA1, ERCC2, ERCC3, TAF1, TAF2, TAF3, TAF4, TAF5, TAF6, TAF7, TAF8, TAF9, TAF10, TAF11, TAF12 and TAF13. Component of the 7-subunit TFIIH core complex composed of XPB/ERCC3, XPD/ERCC2, GTF2H1, GTF2H2, GTF2H3, GTF2H4 and GTF2H5, which is active in NER. The core complex associates with the 3-subunit CDK-activating kinase (CAK) module composed of CCNH/cyclin H, CDK7 and MNAT1 to form the 10-subunit holoenzyme (holo-TFIIH) active in transcription. Interacts with RARA; the interaction requires prior phosphorylation of RARA on 'Ser-369' which then enhances interaction of RARA with CDK7.

The protein localises to the nucleus. In terms of biological role, component of the general transcription and DNA repair factor IIH (TFIIH) core complex, which is involved in general and transcription-coupled nucleotide excision repair (NER) of damaged DNA and, when complexed to CAK, in RNA transcription by RNA polymerase II. In NER, TFIIH acts by opening DNA around the lesion to allow the excision of the damaged oligonucleotide and its replacement by a new DNA fragment. In transcription, TFIIH has an essential role in transcription initiation. When the pre-initiation complex (PIC) has been established, TFIIH is required for promoter opening and promoter escape. Phosphorylation of the C-terminal tail (CTD) of the largest subunit of RNA polymerase II by the kinase module CAK controls the initiation of transcription. This is General transcription factor IIH subunit 3 (GTF2H3) from Homo sapiens (Human).